The sequence spans 575 residues: Amino-acid acetyltransferase, mitochondrial (575 aa).

The transit peptide at M1 to S35 directs the protein to the mitochondrion. Residues F398–H557 form the N-acetyltransferase domain.

Belongs to the acetyltransferase family.

The protein localises to the mitochondrion. The catalysed reaction is L-glutamate + acetyl-CoA = N-acetyl-L-glutamate + CoA + H(+). It participates in amino-acid biosynthesis; L-arginine biosynthesis; N(2)-acetyl-L-ornithine from L-glutamate: step 1/4. In terms of biological role, N-acetylglutamate synthase involved in arginine biosynthesis. This is Amino-acid acetyltransferase, mitochondrial (ARG2) from Debaryomyces hansenii (strain ATCC 36239 / CBS 767 / BCRC 21394 / JCM 1990 / NBRC 0083 / IGC 2968) (Yeast).